We begin with the raw amino-acid sequence, 565 residues long: Glycine--tRNA ligase (565 aa).

Arginine 98 and glutamate 164 together coordinate substrate. ATP-binding positions include 196–198, 206–211, 323–324, and 440–443; these read RNE, IRLREF, EI, and GIDR. 211 to 215 lines the substrate pocket; sequence FTQAE. 436–440 provides a ligand contact to substrate; it reads EPSFG.

This sequence belongs to the class-II aminoacyl-tRNA synthetase family.

It localises to the cytoplasm. The enzyme catalyses tRNA(Gly) + glycine + ATP = glycyl-tRNA(Gly) + AMP + diphosphate. Functionally, catalyzes the attachment of glycine to tRNA(Gly). This Methanothermobacter thermautotrophicus (strain ATCC 29096 / DSM 1053 / JCM 10044 / NBRC 100330 / Delta H) (Methanobacterium thermoautotrophicum) protein is Glycine--tRNA ligase.